The primary structure comprises 55 residues: Large ribosomal subunit protein bL32 (55 aa).

Residues 1-28 (MAVQQNKPTRSKRGMRRSHDALTTATLS) form a disordered region.

Belongs to the bacterial ribosomal protein bL32 family.

This chain is Large ribosomal subunit protein bL32, found in Serratia proteamaculans (strain 568).